We begin with the raw amino-acid sequence, 282 residues long: Pantothenate synthetase (282 aa).

30-37 (MGFLHDGH) contributes to the ATP binding site. Residue His-37 is the Proton donor of the active site. Gln-60 is a (R)-pantoate binding site. Gln-60 lines the beta-alanine pocket. 146–149 (GQKD) lines the ATP pocket. Position 152 (Gln-152) interacts with (R)-pantoate. ATP-binding positions include Ile-175 and 183–186 (KSSR).

The protein belongs to the pantothenate synthetase family. As to quaternary structure, homodimer.

It is found in the cytoplasm. The catalysed reaction is (R)-pantoate + beta-alanine + ATP = (R)-pantothenate + AMP + diphosphate + H(+). The protein operates within cofactor biosynthesis; (R)-pantothenate biosynthesis; (R)-pantothenate from (R)-pantoate and beta-alanine: step 1/1. Catalyzes the condensation of pantoate with beta-alanine in an ATP-dependent reaction via a pantoyl-adenylate intermediate. This Campylobacter jejuni subsp. doylei (strain ATCC BAA-1458 / RM4099 / 269.97) protein is Pantothenate synthetase.